Here is a 550-residue protein sequence, read N- to C-terminus: Hydroxylamine reductase (550 aa).

[2Fe-2S] cluster-binding residues include cysteine 3, cysteine 6, cysteine 18, and cysteine 25. Hybrid [4Fe-2O-2S] cluster contacts are provided by histidine 249, glutamate 273, cysteine 317, cysteine 405, cysteine 433, cysteine 458, glutamate 492, and lysine 494. A Cysteine persulfide modification is found at cysteine 405.

Belongs to the HCP family. [2Fe-2S] cluster is required as a cofactor. Hybrid [4Fe-2O-2S] cluster serves as cofactor.

Its subcellular location is the cytoplasm. The enzyme catalyses A + NH4(+) + H2O = hydroxylamine + AH2 + H(+). Catalyzes the reduction of hydroxylamine to form NH(3) and H(2)O. This chain is Hydroxylamine reductase, found in Escherichia coli O17:K52:H18 (strain UMN026 / ExPEC).